Consider the following 127-residue polypeptide: Ribosome-binding factor A (127 aa).

It belongs to the RbfA family. In terms of assembly, monomer. Binds 30S ribosomal subunits, but not 50S ribosomal subunits or 70S ribosomes.

It localises to the cytoplasm. In terms of biological role, one of several proteins that assist in the late maturation steps of the functional core of the 30S ribosomal subunit. Associates with free 30S ribosomal subunits (but not with 30S subunits that are part of 70S ribosomes or polysomes). Required for efficient processing of 16S rRNA. May interact with the 5'-terminal helix region of 16S rRNA. This Aromatoleum aromaticum (strain DSM 19018 / LMG 30748 / EbN1) (Azoarcus sp. (strain EbN1)) protein is Ribosome-binding factor A.